Reading from the N-terminus, the 134-residue chain is MKSVITISASLAISLMLCCTAQANDHKILGVIAMPRNETNDLALKLPVCRIVKRIQLSTDHGDLQLSGASVYFKATRSASQTLNIPSEIKEGQTTDWININSDNDNKRCVSKITFSGHTVNSSDMATLKIIGDD.

Residues 1–23 form the signal peptide; sequence MKSVITISASLAISLMLCCTAQA.

It belongs to the UPF0412 family.

This is UPF0412 protein YaaI from Escherichia coli O127:H6 (strain E2348/69 / EPEC).